Consider the following 207-residue polypeptide: Protein GrpE (207 aa).

The span at 1 to 11 shows a compositional bias: basic and acidic residues; the sequence is MTETDGQKDNN. The tract at residues 1 to 40 is disordered; the sequence is MTETDGQKDNNQDTAQAAADPVVSKPYIMPDDPEEGSNEA.

This sequence belongs to the GrpE family. In terms of assembly, homodimer.

The protein localises to the cytoplasm. Participates actively in the response to hyperosmotic and heat shock by preventing the aggregation of stress-denatured proteins, in association with DnaK and GrpE. It is the nucleotide exchange factor for DnaK and may function as a thermosensor. Unfolded proteins bind initially to DnaJ; upon interaction with the DnaJ-bound protein, DnaK hydrolyzes its bound ATP, resulting in the formation of a stable complex. GrpE releases ADP from DnaK; ATP binding to DnaK triggers the release of the substrate protein, thus completing the reaction cycle. Several rounds of ATP-dependent interactions between DnaJ, DnaK and GrpE are required for fully efficient folding. The chain is Protein GrpE from Rhodopseudomonas palustris (strain ATCC BAA-98 / CGA009).